The chain runs to 219 residues: Protein matrimony (219 aa).

Residues Pro-74 to Gln-99 show a composition bias toward basic residues. The interval Pro-74–Pro-104 is disordered. In terms of domain architecture, SAM spans Asn-159 to Leu-219.

As to quaternary structure, interacts with polo. Interacts with cort. In terms of processing, probably ubiquitinated: degraded during the oocyte-to-embryo transition by the anaphase promoting complex/cyclosome (APC/C) containing cort protein.

It localises to the nucleus. The protein resides in the chromosome. Its function is as follows. Polo kinase inhibitor required to maintain G2 arrest in the meiotic cell cycle in females. Holds heterochromatically paired homologs together from the end of pachytene until metaphase I. Haploinsufficient locus for homologous achiasmate segregation and may be required for the maintenance of heterochromatic pairings. The protein is Protein matrimony (mtrm) of Drosophila yakuba (Fruit fly).